Here is a 78-residue protein sequence, read N- to C-terminus: D-alanyl carrier protein (78 aa).

A Carrier domain is found at 1 to 78; the sequence is MNIQETVLNI…QIIQQVEALQ (78 aa). An O-(pantetheine 4'-phosphoryl)serine modification is found at Ser36.

Belongs to the DltC family. 4'-phosphopantetheine is transferred from CoA to a specific serine of apo-DCP.

It localises to the cytoplasm. It functions in the pathway cell wall biogenesis; lipoteichoic acid biosynthesis. Functionally, carrier protein involved in the D-alanylation of lipoteichoic acid (LTA). The loading of thioester-linked D-alanine onto DltC is catalyzed by D-alanine--D-alanyl carrier protein ligase DltA. The DltC-carried D-alanyl group is further transferred to cell membrane phosphatidylglycerol (PG) by forming an ester bond, probably catalyzed by DltD. D-alanylation of LTA plays an important role in modulating the properties of the cell wall in Gram-positive bacteria, influencing the net charge of the cell wall. The polypeptide is D-alanyl carrier protein (Enterococcus faecalis (strain ATCC 700802 / V583)).